Here is a 181-residue protein sequence, read N- to C-terminus: Protein AC41 (181 aa).

Functionally, plays a role in late gene expression. The sequence is that of Protein AC41 (AC41) from Autographa californica nuclear polyhedrosis virus (AcMNPV).